The primary structure comprises 154 residues: MSATRAKKVKMATKSCPECDQQVPVACKSCPCGYIFISRKLLNAKHPEKAPSSTENKHEAKRRRTERVRREKINSTVNKDLENRKRSRSNSHSDHIRRGRGRPKSASAKKHEEEREKQEKEIDIYANLSDEKAFVFSVALAEINRKIINQRLIL.

The segment at 46–119 is disordered; that stretch reads HPEKAPSSTE…KHEEEREKQE (74 aa). Residues 68-84 show a composition bias toward basic and acidic residues; it reads VRREKINSTVNKDLENR. A Phosphoserine modification is found at S91. Residues 104-132 are a coiled coil; the sequence is KSASAKKHEEEREKQEKEIDIYANLSDEK. Positions 109-119 are enriched in basic and acidic residues; that stretch reads KKHEEEREKQE.

Belongs to the UPF0547 family.

The polypeptide is UPF0547 protein C16orf87 homolog (Bos taurus (Bovine)).